Here is a 158-residue protein sequence, read N- to C-terminus: 2-C-methyl-D-erythritol 2,4-cyclodiphosphate synthase (158 aa).

A divalent metal cation is bound by residues Asp-9 and His-11. 4-CDP-2-C-methyl-D-erythritol 2-phosphate is bound by residues Asp-9–His-11 and His-35–Ser-36. His-43 contacts a divalent metal cation. 4-CDP-2-C-methyl-D-erythritol 2-phosphate contacts are provided by residues Asp-57–Gly-59, Phe-62–Asp-66, Thr-133–Glu-136, Phe-140, and Arg-143.

Belongs to the IspF family. As to quaternary structure, homotrimer. It depends on a divalent metal cation as a cofactor.

The enzyme catalyses 4-CDP-2-C-methyl-D-erythritol 2-phosphate = 2-C-methyl-D-erythritol 2,4-cyclic diphosphate + CMP. The protein operates within isoprenoid biosynthesis; isopentenyl diphosphate biosynthesis via DXP pathway; isopentenyl diphosphate from 1-deoxy-D-xylulose 5-phosphate: step 4/6. Functionally, involved in the biosynthesis of isopentenyl diphosphate (IPP) and dimethylallyl diphosphate (DMAPP), two major building blocks of isoprenoid compounds. Catalyzes the conversion of 4-diphosphocytidyl-2-C-methyl-D-erythritol 2-phosphate (CDP-ME2P) to 2-C-methyl-D-erythritol 2,4-cyclodiphosphate (ME-CPP) with a corresponding release of cytidine 5-monophosphate (CMP). The sequence is that of 2-C-methyl-D-erythritol 2,4-cyclodiphosphate synthase from Pasteurella multocida (strain Pm70).